A 276-amino-acid polypeptide reads, in one-letter code: Large ribosomal subunit protein uL2 (276 aa).

Residues 221-276 (RGSAMNPNDHPHGGGEGRAPIGRKSPMTPWGKKARGVKTRDRKKASNALIIRRRKK) are disordered. Basic residues predominate over residues 252-276 (KKARGVKTRDRKKASNALIIRRRKK).

Belongs to the universal ribosomal protein uL2 family. In terms of assembly, part of the 50S ribosomal subunit. Forms a bridge to the 30S subunit in the 70S ribosome.

In terms of biological role, one of the primary rRNA binding proteins. Required for association of the 30S and 50S subunits to form the 70S ribosome, for tRNA binding and peptide bond formation. It has been suggested to have peptidyltransferase activity; this is somewhat controversial. Makes several contacts with the 16S rRNA in the 70S ribosome. The protein is Large ribosomal subunit protein uL2 of Aster yellows witches'-broom phytoplasma (strain AYWB).